The following is a 175-amino-acid chain: ADP-ribose 1''-phosphate phosphatase (175 aa).

The Macro domain maps to 1–175 (MSKLNYIKGD…HQVLINVYVI (175 aa)). Residues 9-11 (GDL), 25-27 (ACN), 32-37 (WGAGVA), and 147-153 (INAGLFN) contribute to the substrate site.

The protein belongs to the POA1 family.

The enzyme catalyses ADP-alpha-D-ribose 1''-phosphate + H2O = ADP-D-ribose + phosphate. In terms of biological role, highly specific phosphatase involved in the metabolism of ADP-ribose 1''-phosphate (Appr1p) which is produced as a consequence of tRNA splicing. The polypeptide is ADP-ribose 1''-phosphate phosphatase (POA1) (Meyerozyma guilliermondii (strain ATCC 6260 / CBS 566 / DSM 6381 / JCM 1539 / NBRC 10279 / NRRL Y-324) (Yeast)).